The primary structure comprises 149 residues: Vesicle-associated protein 3-1 (149 aa).

M1 carries the N-acetylmethionine modification. S2 bears the N-acetylserine; in Vesicle-associated protein 3-1, N-terminally processed mark. Residues 6-126 (LLEIEPMYLQ…EETKLRVTYV (121 aa)) enclose the MSP domain.

It belongs to the VAMP-associated protein (VAP) (TC 9.B.17) family.

Functionally, may play a role in vesicle trafficking. The chain is Vesicle-associated protein 3-1 (PVA31) from Arabidopsis thaliana (Mouse-ear cress).